A 440-amino-acid chain; its full sequence is tRNA(Ile)-lysidine synthase (440 aa).

ATP is bound at residue 29–34 (SGGLDS).

The protein belongs to the tRNA(Ile)-lysidine synthase family.

Its subcellular location is the cytoplasm. It catalyses the reaction cytidine(34) in tRNA(Ile2) + L-lysine + ATP = lysidine(34) in tRNA(Ile2) + AMP + diphosphate + H(+). Functionally, ligates lysine onto the cytidine present at position 34 of the AUA codon-specific tRNA(Ile) that contains the anticodon CAU, in an ATP-dependent manner. Cytidine is converted to lysidine, thus changing the amino acid specificity of the tRNA from methionine to isoleucine. This chain is tRNA(Ile)-lysidine synthase, found in Pectobacterium atrosepticum (strain SCRI 1043 / ATCC BAA-672) (Erwinia carotovora subsp. atroseptica).